The following is a 442-amino-acid chain: Endothelin receptor type B (442 aa).

An N-terminal signal peptide occupies residues 1 to 26 (MQSSASRCGRALVALLLACGLLGVWG). Residues 27–101 (EKRGFPPAQA…RKIEINKTFK (75 aa)) are Extracellular-facing. N-linked (GlcNAc...) asparagine glycosylation is found at asparagine 60 and asparagine 97. Residues 102 to 126 (YINTIVSCLVFVLGIIGNSTLLRII) form a helical membrane-spanning segment. Residues 127 to 137 (YKNKCMRNGPN) lie on the Cytoplasmic side of the membrane. Residues 138–163 (ILIASLALGDLLHIIIDIPINAYKLL) form a helical membrane-spanning segment. Over 164–175 (AGDWPFGAEMCK) the chain is Extracellular. The cysteines at positions 174 and 255 are disulfide-linked. The helical transmembrane segment at 176–197 (LVPFIQKASVGITVLSLCALSI) threads the bilayer. The Cytoplasmic portion of the chain corresponds to 198-218 (DRYRAVASWSRIKGIGVPKWT). The helical transmembrane segment at 219-243 (AVEIVLIWVVSVVLAVPEAIGFDVI) threads the bilayer. Residues 244–271 (TSDYKGKPLRVCMLNPFQKTAFMQFYKT) lie on the Extracellular side of the membrane. The helical transmembrane segment at 272 to 296 (AKDWWLFSFYFCLPLAITAIFYTLM) threads the bilayer. Residues 297 to 324 (TCEMLRKKSGMQIALNDHLKQRREVAKT) are Cytoplasmic-facing. Serine 305 is subject to Phosphoserine. A helical transmembrane segment spans residues 325–350 (VFCLVLVFALCWLPLHLSRILKLTLY). At 351–362 (DQSNPQRCELLS) the chain is on the extracellular side. The helical transmembrane segment at 363–389 (FLLVLDYIGINMASLNSCINPIALYLV) threads the bilayer. Over 390–442 (SKRFKNCFKSCLCCWCQTFEEKQSLEEKQSCLKFKANDHGYDNFRSSNKYSSS) the chain is Cytoplasmic. S-palmitoyl cysteine attachment occurs at residues cysteine 402, cysteine 403, and cysteine 405. Serine 419 carries the post-translational modification Phosphoserine. Position 439 is a phosphotyrosine (tyrosine 439). Residues serine 440, serine 441, and serine 442 each carry the phosphoserine modification.

It belongs to the G-protein coupled receptor 1 family. Endothelin receptor subfamily. EDNRB sub-subfamily. As to expression, widely distributed in cell types of a variety of tissues.

The protein localises to the cell membrane. In terms of biological role, non-specific receptor for endothelin 1, 2, and 3. Mediates its action by association with G proteins that activate a phosphatidylinositol-calcium second messenger system. The chain is Endothelin receptor type B from Rattus norvegicus (Rat).